A 163-amino-acid chain; its full sequence is Transcriptional repressor NrdR (163 aa).

A zinc finger spans residues 3 to 34 (CPSCNSESSRVVDSRSIEMGVSIRRRRECSEC). Positions 46 to 136 (LLVVKRNGVT…VYKSFNCAED (91 aa)) constitute an ATP-cone domain.

It belongs to the NrdR family. Requires Zn(2+) as cofactor.

Its function is as follows. Negatively regulates transcription of bacterial ribonucleotide reductase nrd genes and operons by binding to NrdR-boxes. The protein is Transcriptional repressor NrdR of Corynebacterium jeikeium (strain K411).